A 361-amino-acid polypeptide reads, in one-letter code: Putative dual-specificity RNA methyltransferase RlmN (361 aa).

Residue glutamate 91 is the Proton acceptor of the active site. The Radical SAM core domain occupies 97 to 329 (QHYGLSVCVT…KKKGVNCVVR (233 aa)). Cysteine 111, cysteine 115, and cysteine 118 together coordinate [4Fe-4S] cluster. Residues 163-164 (GE), serine 195, 218-220 (SLH), and threonine 296 contribute to the S-adenosyl-L-methionine site.

Belongs to the radical SAM superfamily. RlmN family. It depends on [4Fe-4S] cluster as a cofactor.

The protein resides in the cytoplasm. It carries out the reaction adenosine(2503) in 23S rRNA + 2 reduced [2Fe-2S]-[ferredoxin] + 2 S-adenosyl-L-methionine = 2-methyladenosine(2503) in 23S rRNA + 5'-deoxyadenosine + L-methionine + 2 oxidized [2Fe-2S]-[ferredoxin] + S-adenosyl-L-homocysteine. It catalyses the reaction adenosine(37) in tRNA + 2 reduced [2Fe-2S]-[ferredoxin] + 2 S-adenosyl-L-methionine = 2-methyladenosine(37) in tRNA + 5'-deoxyadenosine + L-methionine + 2 oxidized [2Fe-2S]-[ferredoxin] + S-adenosyl-L-homocysteine. Functionally, specifically methylates position 2 of adenine 2503 in 23S rRNA and position 2 of adenine 37 in tRNAs. In Streptococcus pneumoniae (strain CGSP14), this protein is Putative dual-specificity RNA methyltransferase RlmN.